Consider the following 122-residue polypeptide: Large ribosomal subunit protein uL14 (122 aa).

This sequence belongs to the universal ribosomal protein uL14 family. As to quaternary structure, part of the 50S ribosomal subunit. Forms a cluster with proteins L3 and L19. In the 70S ribosome, L14 and L19 interact and together make contacts with the 16S rRNA in bridges B5 and B8.

Functionally, binds to 23S rRNA. Forms part of two intersubunit bridges in the 70S ribosome. The polypeptide is Large ribosomal subunit protein uL14 (Polaromonas naphthalenivorans (strain CJ2)).